Consider the following 100-residue polypeptide: Urease subunit gamma (100 aa).

It belongs to the urease gamma subunit family. In terms of assembly, heterotrimer of UreA (gamma), UreB (beta) and UreC (alpha) subunits. Three heterotrimers associate to form the active enzyme.

Its subcellular location is the cytoplasm. The enzyme catalyses urea + 2 H2O + H(+) = hydrogencarbonate + 2 NH4(+). It participates in nitrogen metabolism; urea degradation; CO(2) and NH(3) from urea (urease route): step 1/1. This chain is Urease subunit gamma, found in Blochmanniella floridana.